The chain runs to 533 residues: Sterol 26-hydroxylase, mitochondrial (533 aa).

The N-terminal 32 residues, 1-32, are a transit peptide targeting the mitochondrion; that stretch reads MAAWSRTRLRWTLLDPRVVGRGLCPQGARAKA. Residues 34–60 are disordered; the sequence is IPAALQAQESTEGPGTGQDRPRLRSPA. 5 positions are modified to N6-acetyllysine: Lys142, Lys232, Lys285, Lys296, and Lys375. Positions 386–400 are sterol-binding; that stretch reads PLLKAVIKETLRLYP. Residue Cys479 participates in heme binding. 2 positions are modified to N6-acetyllysine: Lys512 and Lys523.

Belongs to the cytochrome P450 family. Interacts with HSP70; this interaction is required for initial targeting to mitochondria. It depends on heme as a cofactor. Post-translationally, acetylation of Lys-125 and Lys-285 is observed in liver mitochondria from fasted mice but not from fed mice. As to expression, expressed in the gray and white matter of cerebellum (at protein level).

It is found in the mitochondrion inner membrane. The catalysed reaction is 5beta-cholestane-3alpha,7alpha,12alpha-triol + 6 reduced [adrenodoxin] + 3 O2 + 5 H(+) = (25R)-3alpha,7alpha,12alpha-trihydroxy-5beta-cholestan-26-oate + 6 oxidized [adrenodoxin] + 4 H2O. It carries out the reaction cholestanol + 2 reduced [adrenodoxin] + O2 + 2 H(+) = (25R)-26-hydroxycholestanol + 2 oxidized [adrenodoxin] + H2O. The enzyme catalyses (25R)-3beta-hydroxycholest-5-en-7-one-26-al + 2 reduced [adrenodoxin] + O2 + H(+) = (25R)-3beta-hydroxycholest-5-en-7-one-26-oate + 2 oxidized [adrenodoxin] + H2O. It catalyses the reaction (25R)-3beta,26-dihydroxycholest-5-en-7-one + 2 reduced [adrenodoxin] + O2 + 2 H(+) = (25R)-3beta-hydroxycholest-5-en-7-one-26-al + 2 oxidized [adrenodoxin] + 2 H2O. The catalysed reaction is 7-oxocholesterol + 2 reduced [adrenodoxin] + O2 + 2 H(+) = (25R)-3beta,26-dihydroxycholest-5-en-7-one + 2 oxidized [adrenodoxin] + H2O. It carries out the reaction calciol + 2 reduced [adrenodoxin] + O2 + 2 H(+) = calcidiol + 2 oxidized [adrenodoxin] + H2O. The enzyme catalyses (25R)-5beta-cholestane-3alpha,7alpha,12alpha,26-tetrol + 2 reduced [adrenodoxin] + O2 + 2 H(+) = (25R)-3alpha,7alpha,12alpha-trihydroxy-5beta-cholestan-26-al + 2 oxidized [adrenodoxin] + 2 H2O. It catalyses the reaction 2 reduced [adrenodoxin] + cholesterol + O2 + 2 H(+) = (25R)-cholest-5-ene-3beta,26-diol + 2 oxidized [adrenodoxin] + H2O. The catalysed reaction is (25R)-3beta,4beta-dihydroxycholest-5-en-26-al + 2 reduced [adrenodoxin] + O2 + H(+) = (25R)-3beta,4beta-dihydroxycholest-5-en-26-oate + 2 oxidized [adrenodoxin] + H2O. It carries out the reaction (25R)-4beta,26-dihydroxycholesterol + 2 reduced [adrenodoxin] + O2 + 2 H(+) = (25R)-3beta,4beta-dihydroxycholest-5-en-26-al + 2 oxidized [adrenodoxin] + 2 H2O. The enzyme catalyses 4beta-hydroxycholesterol + 2 reduced [adrenodoxin] + O2 + 2 H(+) = (25R)-4beta,26-dihydroxycholesterol + 2 oxidized [adrenodoxin] + H2O. It catalyses the reaction (25R)-3beta-hydroxy-5-cholesten-26-al + 2 reduced [adrenodoxin] + O2 + H(+) = (25R)-3beta-hydroxy-5-cholestenoate + 2 oxidized [adrenodoxin] + H2O. The catalysed reaction is (25R)-cholest-5-ene-3beta,26-diol + 2 reduced [adrenodoxin] + O2 + 2 H(+) = (25R)-3beta-hydroxy-5-cholesten-26-al + 2 oxidized [adrenodoxin] + 2 H2O. It carries out the reaction (25R)-3alpha,7alpha,12alpha-trihydroxy-5beta-cholestan-26-al + 2 reduced [adrenodoxin] + O2 + H(+) = (25R)-3alpha,7alpha,12alpha-trihydroxy-5beta-cholestan-26-oate + 2 oxidized [adrenodoxin] + H2O. The enzyme catalyses 5beta-cholestane-3alpha,7alpha,12alpha-triol + 2 reduced [adrenodoxin] + O2 + 2 H(+) = (25R)-5beta-cholestane-3alpha,7alpha,12alpha,26-tetrol + 2 oxidized [adrenodoxin] + H2O. It participates in hormone biosynthesis; cholecalciferol biosynthesis. Its pathway is steroid metabolism; cholesterol degradation. It functions in the pathway lipid metabolism; bile acid biosynthesis. Cytochrome P450 monooxygenase that catalyzes regio- and stereospecific hydroxylation of cholesterol and its derivatives. Hydroxylates (with R stereochemistry) the terminal methyl group of cholesterol side-chain in a three step reaction to yield at first a C26 alcohol, then a C26 aldehyde and finally a C26 acid. Regulates cholesterol homeostasis by catalyzing the conversion of excess cholesterol to bile acids via both the 'neutral' (classic) and the 'acid' (alternative) pathways. May also regulate cholesterol homeostasis via generation of active oxysterols, which act as ligands for NR1H2 and NR1H3 nuclear receptors, modulating the transcription of genes involved in lipid metabolism. Plays a role in cholestanol metabolism in the cerebellum. Similarly to cholesterol, hydroxylates cholestanol and may facilitate sterol diffusion through the blood-brain barrier to the systemic circulation for further degradation. Also hydroxylates retinal 7-ketocholesterol, a noxious oxysterol with pro-inflammatory and pro-apoptotic effects, and may play a role in its elimination from the retinal pigment epithelium. May play a redundant role in vitamin D biosynthesis. Catalyzes 25-hydroxylation of vitamin D3 that is required for its conversion to a functionally active form. This chain is Sterol 26-hydroxylase, mitochondrial, found in Mus musculus (Mouse).